We begin with the raw amino-acid sequence, 269 residues long: Flagellar hook-basal body complex protein FlhP (269 aa).

Positions 7-65 (TASTTLNQLQQQIDTISSNLSNSNTTGYKAKDTNFSELVRQQFDQVDEKNEEVAKARKT) form a coiled coil.

It belongs to the flagella basal body rod proteins family.

The protein is Flagellar hook-basal body complex protein FlhP (flhP) of Bacillus subtilis (strain 168).